Reading from the N-terminus, the 364-residue chain is Photoreceptor outer segment membrane glycoprotein 2 (364 aa).

Over 1-24 (MTVLKVKFTKTKRDKLAQILWILN) the chain is Cytoplasmic. The helical transmembrane segment at 25 to 43 (WVSVVSGIILFSLGLFLKI) threads the bilayer. The Lumenal portion of the chain corresponds to 44–61 (EIKKRNEVMAKGDINSVP). Residues 62-80 (NMLISVGVIACVVNFLGGK) traverse the membrane as a helical segment. Residues 81–99 (ICYDCSDANKFSRWKLIML) are Cytoplasmic-facing. The chain crosses the membrane as a helical span at residues 100 to 123 (PYIICTFCFTFCILLGALMCYTMR). Topologically, residues 124–264 (NELEESLYLG…LEYYTAIMRS (141 aa)) are lumenal. N-linked (GlcNAc...) asparagine glycosylation is present at Asn-229. Residues 265–290 (IGIAALLIWLFELSVLIGVRYLQTAM) traverse the membrane as a helical segment. Residues 291–364 (KNVLLQGDLQ…VTAKSIPAAS (74 aa)) are Cytoplasmic-facing.

It belongs to the PRPH2/ROM1 family.

It is found in the membrane. This chain is Photoreceptor outer segment membrane glycoprotein 2, found in Gallus gallus (Chicken).